The chain runs to 415 residues: MGLRKLSIANVDLKDKRVLMRVDFNVPMKDGKVTNTQRIVGASPTIKYALDKGAKSIVLMSHLGGRVGNKVARYSLNPVGEEVSKLLGKPVKFLPDCVGPETTEGMCQSSAGSVFLLENLRFHVEEEGKGVSPTGEKIKATPEQVKAFSENLTKLGDVYLNDAFGTAHRAHASMVGCRLTQRACGFLMDKELTYFSKLLDQPQHPFLAIIGGAKVSDKIQLIKNMLDKVDELIITGGMAFTFLKKLHNMKIGKSLYDEPGAAIVDEWMQLAKSKNVKIHLPVDFITGDKFAEDANTGTATVEPGIRDTHMGLDGGPKTMEEFCKVISRAKTIVWNGPMGVFEMEKFAGGTKAAMDAVVAATTKGVTNNNGGGDTATCCPKWKTEAQVSHVSTGVGASLELLEGKQLPGILALSDA.

Residues V22, D23, F24, N25, Q37, R38, S61, H62, G64, L120, R121, H168, and R169 each contribute to the (2R)-3-phosphoglycerate site. G212 contacts ADP. G212 lines the CDP pocket. AMP is bound by residues A213 and K214. A213 serves as a coordination point for ATP. Residue A213 coordinates Mg(2+). A CDP-binding site is contributed by D217. Mg(2+) is bound at residue D217. K218 contacts AMP. K218 lines the ATP pocket. G236 lines the ADP pocket. G236 contributes to the CDP binding site. Residues G237 and G311 each coordinate AMP. 2 residues coordinate ATP: G237 and G311. CDP-binding residues include G336 and F341. F341 contributes to the ADP binding site. E342 is a binding site for AMP. ATP-binding residues include E342, D373, and T374. A Mg(2+)-binding site is contributed by D373.

The protein belongs to the phosphoglycerate kinase family. Monomer. The cofactor is Mg(2+).

The protein localises to the cytoplasm. The catalysed reaction is (2R)-3-phosphoglycerate + ATP = (2R)-3-phospho-glyceroyl phosphate + ADP. It functions in the pathway carbohydrate degradation; glycolysis; pyruvate from D-glyceraldehyde 3-phosphate: step 2/5. The polypeptide is Phosphoglycerate kinase (PGK) (Opisthorchis sinensis (Clonorchis sinensis)).